The primary structure comprises 154 residues: 6,7-dimethyl-8-ribityllumazine synthase (154 aa).

5-amino-6-(D-ribitylamino)uracil-binding positions include F21, 55 to 57 (AFE), and 79 to 81 (CVI). Residue 84–85 (AT) coordinates (2S)-2-hydroxy-3-oxobutyl phosphate. The active-site Proton donor is the H87. F112 provides a ligand contact to 5-amino-6-(D-ribitylamino)uracil. Residue R126 coordinates (2S)-2-hydroxy-3-oxobutyl phosphate.

The protein belongs to the DMRL synthase family. In terms of assembly, forms an icosahedral capsid composed of 60 subunits, arranged as a dodecamer of pentamers.

It catalyses the reaction (2S)-2-hydroxy-3-oxobutyl phosphate + 5-amino-6-(D-ribitylamino)uracil = 6,7-dimethyl-8-(1-D-ribityl)lumazine + phosphate + 2 H2O + H(+). It functions in the pathway cofactor biosynthesis; riboflavin biosynthesis; riboflavin from 2-hydroxy-3-oxobutyl phosphate and 5-amino-6-(D-ribitylamino)uracil: step 1/2. Catalyzes the formation of 6,7-dimethyl-8-ribityllumazine by condensation of 5-amino-6-(D-ribitylamino)uracil with 3,4-dihydroxy-2-butanone 4-phosphate. This is the penultimate step in the biosynthesis of riboflavin. This Staphylococcus aureus (strain MRSA252) protein is 6,7-dimethyl-8-ribityllumazine synthase.